The chain runs to 226 residues: Orotate phosphoribosyltransferase (226 aa).

A 5-phospho-alpha-D-ribose 1-diphosphate-binding site is contributed by lysine 29. 37–38 serves as a coordination point for orotate; the sequence is FF. Residues 75–76, arginine 101, lysine 102, lysine 105, histidine 107, and 126–134 each bind 5-phospho-alpha-D-ribose 1-diphosphate; these read YK and DDVISAGTS. Positions 130 and 158 each coordinate orotate.

This sequence belongs to the purine/pyrimidine phosphoribosyltransferase family. PyrE subfamily. As to quaternary structure, homodimer. Requires Mg(2+) as cofactor.

The enzyme catalyses orotidine 5'-phosphate + diphosphate = orotate + 5-phospho-alpha-D-ribose 1-diphosphate. The protein operates within pyrimidine metabolism; UMP biosynthesis via de novo pathway; UMP from orotate: step 1/2. Its function is as follows. Catalyzes the transfer of a ribosyl phosphate group from 5-phosphoribose 1-diphosphate to orotate, leading to the formation of orotidine monophosphate (OMP). In Ralstonia nicotianae (strain ATCC BAA-1114 / GMI1000) (Ralstonia solanacearum), this protein is Orotate phosphoribosyltransferase.